A 224-amino-acid polypeptide reads, in one-letter code: Flagellar L-ring protein (224 aa).

Residues Met-1 to Ala-15 form the signal peptide. Cys-16 is lipidated: N-palmitoyl cysteine. Cys-16 carries the S-diacylglycerol cysteine lipid modification.

This sequence belongs to the FlgH family. In terms of assembly, the basal body constitutes a major portion of the flagellar organelle and consists of four rings (L,P,S, and M) mounted on a central rod.

The protein resides in the cell outer membrane. The protein localises to the bacterial flagellum basal body. Functionally, assembles around the rod to form the L-ring and probably protects the motor/basal body from shearing forces during rotation. This is Flagellar L-ring protein from Shewanella sp. (strain MR-4).